The sequence spans 174 residues: NADH-ubiquinone oxidoreductase chain 6 (174 aa).

The next 4 membrane-spanning stretches (helical) occupy residues 24–44 (LALGLTLLIQTIFVCLLSGLM), 53–73 (ILFLIFLGGMLVLFIYVTSLA), 82–102 (IKLTLFSMFILFFMFILSMIL), and 143–163 (FVTILLMNYLLITLIVVVKIT).

Belongs to the complex I subunit 6 family.

It localises to the mitochondrion membrane. It carries out the reaction a ubiquinone + NADH + 5 H(+)(in) = a ubiquinol + NAD(+) + 4 H(+)(out). In terms of biological role, core subunit of the mitochondrial membrane respiratory chain NADH dehydrogenase (Complex I) that is believed to belong to the minimal assembly required for catalysis. Complex I functions in the transfer of electrons from NADH to the respiratory chain. The immediate electron acceptor for the enzyme is believed to be ubiquinone. In Drosophila yakuba (Fruit fly), this protein is NADH-ubiquinone oxidoreductase chain 6 (mt:ND6).